Reading from the N-terminus, the 200-residue chain is Recombination protein RecR (200 aa).

The segment at 57–72 (CQHCRTFTENSLCDIC) adopts a C4-type zinc-finger fold. Residues 81–176 (GQLCIVETPA…NITRIAHGVP (96 aa)) form the Toprim domain.

It belongs to the RecR family.

In terms of biological role, may play a role in DNA repair. It seems to be involved in an RecBC-independent recombinational process of DNA repair. It may act with RecF and RecO. This Tolumonas auensis (strain DSM 9187 / NBRC 110442 / TA 4) protein is Recombination protein RecR.